The chain runs to 138 residues: MSLELYNTTKRVIPEEKLERVIRHVIEAEGFVPDVVVAVFCGDRLIQRINREHLGHDYATDTITFRYNSGREIEGEFYVSLDVIDKNSRRFKTGFENELFRVAIHSALHLAGYDDSGDEARAGMKKREDRYLSQLPSL.

Positions 105, 109, and 115 each coordinate Zn(2+).

This sequence belongs to the endoribonuclease YbeY family. Zn(2+) serves as cofactor.

The protein resides in the cytoplasm. In terms of biological role, single strand-specific metallo-endoribonuclease involved in late-stage 70S ribosome quality control and in maturation of the 3' terminus of the 16S rRNA. This Chlorobium phaeobacteroides (strain BS1) protein is Endoribonuclease YbeY.